The chain runs to 214 residues: Large ribosomal subunit protein uL3 (214 aa).

The segment at 133–154 (GLGAGHGTQRKHRSPGSIGGCA) is disordered.

This sequence belongs to the universal ribosomal protein uL3 family. Part of the 50S ribosomal subunit. Forms a cluster with proteins L14 and L19.

In terms of biological role, one of the primary rRNA binding proteins, it binds directly near the 3'-end of the 23S rRNA, where it nucleates assembly of the 50S subunit. This is Large ribosomal subunit protein uL3 from Streptomyces avermitilis (strain ATCC 31267 / DSM 46492 / JCM 5070 / NBRC 14893 / NCIMB 12804 / NRRL 8165 / MA-4680).